The primary structure comprises 707 residues: Elongation factor G (707 aa).

The region spanning 8 to 296 (ERYRNFGIMA…AVVDFLPAPT (289 aa)) is the tr-type G domain. Residues 17 to 24 (AHIDAGKT), 94 to 98 (DTPGH), and 148 to 151 (NKMD) each bind GTP.

The protein belongs to the TRAFAC class translation factor GTPase superfamily. Classic translation factor GTPase family. EF-G/EF-2 subfamily.

It localises to the cytoplasm. In terms of biological role, catalyzes the GTP-dependent ribosomal translocation step during translation elongation. During this step, the ribosome changes from the pre-translocational (PRE) to the post-translocational (POST) state as the newly formed A-site-bound peptidyl-tRNA and P-site-bound deacylated tRNA move to the P and E sites, respectively. Catalyzes the coordinated movement of the two tRNA molecules, the mRNA and conformational changes in the ribosome. In Paracoccus denitrificans (strain Pd 1222), this protein is Elongation factor G.